The following is a 658-amino-acid chain: Protein teflon (658 aa).

The segment at 33-56 (LYCHFCRDLFTQLPEFLRHLQGAH) adopts a C2H2-type 1 zinc-finger fold. Disordered stretches follow at residues 78-127 (EQDD…SEQK) and 151-175 (HINN…SESN). Basic and acidic residues predominate over residues 100-111 (IPAKSEDSRAID). A compositionally biased stretch (polar residues) spans 118–127 (DNSPVKSEQK). A C2H2-type 2; degenerate zinc finger spans residues 608–630 (YFCKCCDDIFTLNEDYTRHLVSQ). A C2H2-type 3 zinc finger spans residues 634–657 (YQCTKCIKAFKYRGHFEKHLQNVH).

This sequence belongs to the Teflon family.

It is found in the nucleus. The protein resides in the chromosome. In terms of biological role, specifically required in males for proper segregation of autosomal bivalents at meiosis I. Expression is required in the male germ line prior to spermatocyte stage S4. May have a role as a bridging molecule maintaining adhesion to hold autosome bivalents together via heterochromatic connections. The polypeptide is Protein teflon (Drosophila erecta (Fruit fly)).